Here is a 410-residue protein sequence, read N- to C-terminus: Neurotensin receptor type 2 (410 aa).

At 1-32 (METSSPRPPRPSSNPGLSLDARLGVDTRLWAK) the chain is on the extracellular side. Residues 33–55 (VLFTALYALIWALGAAGNALSAH) form a helical membrane-spanning segment. Over 56–64 (VVLKARAGR) the chain is Cytoplasmic. The helical transmembrane segment at 65–87 (AGRLRHHVLSLALAGLLLLLVGV) threads the bilayer. Residues 88 to 109 (PVELYSFVWFHYPWVFGDLGCR) lie on the Extracellular side of the membrane. Cysteine 108 and cysteine 194 form a disulfide bridge. A helical transmembrane segment spans residues 110–131 (GYYFVHELCAYATVLSVAGLSA). At 132–154 (ERCLAVCQPLRARSLLTPRRTRW) the chain is on the cytoplasmic side. A helical membrane pass occupies residues 155-176 (LVALSWAASLGLALPMAVIMGQ). Topologically, residues 177–217 (KHELETADGEPEPASRVCTVLVSRTALQVFIQVNVLVSFVL) are extracellular. A helical transmembrane segment spans residues 218–237 (PLALTAFLNGVTVSHLLALC). The Cytoplasmic segment spans residues 238–297 (SQVPSTSTPGSSTPSRLELLSEEGLLSFIVWKKTFIQGGQVSLVRHKDVRRIRSLQRSVQ). A helical membrane pass occupies residues 298–318 (VLRAIVVMYVICWLPYHARRL). The Extracellular segment spans residues 319 to 337 (MYCYVPDDAWTDPLYNFYH). A helical transmembrane segment spans residues 338-358 (YFYMVTNTLFYVSSAVTPLLY). The Cytoplasmic segment spans residues 359–410 (NAVSSSFRKLFLEAVSSLCGEHHPMKRLPPKPQSPTLMDTASGFGDPPETRT). Cysteine 377 carries S-palmitoyl cysteine lipidation. Positions 381 to 410 (HPMKRLPPKPQSPTLMDTASGFGDPPETRT) are disordered.

The protein belongs to the G-protein coupled receptor 1 family. Neurotensin receptor subfamily. NTSR2 sub-subfamily. Expressed in prostate (at protein level).

It localises to the cell membrane. Receptor for the tridecapeptide neurotensin. It is associated with G proteins that activate a phosphatidylinositol-calcium second messenger system. The polypeptide is Neurotensin receptor type 2 (NTSR2) (Homo sapiens (Human)).